The sequence spans 264 residues: H-2 class II histocompatibility antigen, E-D beta chain (264 aa).

The signal sequence occupies residues 1–31; it reads MVWLPRVPCVAAVILLLTVLSPPVALVRDTR. The beta-1 stretch occupies residues 32–121; that stretch reads PRFLEYVTSE…ISDKFLVRRR (90 aa). Residues 32–225 lie on the Extracellular side of the membrane; that stretch reads PRFLEYVTSE…KAQSTSAQNK (194 aa). Intrachain disulfides connect cysteine 42–cysteine 106 and cysteine 144–cysteine 200. Asparagine 46 carries N-linked (GlcNAc...) asparagine glycosylation. Residues 122 to 215 form a beta-2 region; the sequence is VEPTVTVYPT…SLTDPVTVEW (94 aa). The region spanning 124-214 is the Ig-like C1-type domain; the sequence is PTVTVYPTKT…PSLTDPVTVE (91 aa). Residues 216–225 are connecting peptide; the sequence is KAQSTSAQNK. Residues 226 to 248 form a helical membrane-spanning segment; that stretch reads MLSGVGGFVLGLLFLGAGLFIYF. Residues 249–264 lie on the Cytoplasmic side of the membrane; the sequence is RNQKGQSGLQPTGLLS.

The protein belongs to the MHC class II family.

The protein localises to the membrane. The polypeptide is H-2 class II histocompatibility antigen, E-D beta chain (Mus musculus (Mouse)).